Reading from the N-terminus, the 253-residue chain is Imidazole glycerol phosphate synthase subunit HisF (253 aa).

Active-site residues include aspartate 11 and aspartate 130.

It belongs to the HisA/HisF family. As to quaternary structure, heterodimer of HisH and HisF.

It is found in the cytoplasm. The enzyme catalyses 5-[(5-phospho-1-deoxy-D-ribulos-1-ylimino)methylamino]-1-(5-phospho-beta-D-ribosyl)imidazole-4-carboxamide + L-glutamine = D-erythro-1-(imidazol-4-yl)glycerol 3-phosphate + 5-amino-1-(5-phospho-beta-D-ribosyl)imidazole-4-carboxamide + L-glutamate + H(+). Its pathway is amino-acid biosynthesis; L-histidine biosynthesis; L-histidine from 5-phospho-alpha-D-ribose 1-diphosphate: step 5/9. In terms of biological role, IGPS catalyzes the conversion of PRFAR and glutamine to IGP, AICAR and glutamate. The HisF subunit catalyzes the cyclization activity that produces IGP and AICAR from PRFAR using the ammonia provided by the HisH subunit. This Clostridium botulinum (strain Alaska E43 / Type E3) protein is Imidazole glycerol phosphate synthase subunit HisF.